Consider the following 314-residue polypeptide: Ribosomal RNA small subunit methyltransferase H (314 aa).

Residues Gly37–His39, Asp57, Phe83, Asp105, and Gln112 each bind S-adenosyl-L-methionine.

This sequence belongs to the methyltransferase superfamily. RsmH family.

Its subcellular location is the cytoplasm. It carries out the reaction cytidine(1402) in 16S rRNA + S-adenosyl-L-methionine = N(4)-methylcytidine(1402) in 16S rRNA + S-adenosyl-L-homocysteine + H(+). Specifically methylates the N4 position of cytidine in position 1402 (C1402) of 16S rRNA. The chain is Ribosomal RNA small subunit methyltransferase H from Thioalkalivibrio sulfidiphilus (strain HL-EbGR7).